A 497-amino-acid chain; its full sequence is uncharacterized protein (497 aa).

Residues 1–16 are compositionally biased toward polar residues; the sequence is MSTTTETVTWSQYKPQ. Residues 1–29 form a disordered region; that stretch reads MSTTTETVTWSQYKPQETQRRLSRSSTIT. At S64 the chain carries Phosphoserine. 6 consecutive transmembrane segments (helical) span residues 86–106, 120–140, 155–175, 180–200, 222–242, and 258–278; these read IALVLLNNLMSEMSLTIALPI, FSGLVIGIPTMISLVCLYPML, FRPLIVSCISQIIGHLLYSLA, WLYLILIGRMCSGVGFTMFLY, LNILAQILGSMAGAFLGGILA, and AGSWFMLFIWIVYSIFLSIFF. S295 carries the phosphoserine modification. 6 consecutive transmembrane segments (helical) span residues 309–329, 348–368, 377–397, 407–427, 443–463, and 468–488; these read FMLCFLSMAAFISIFNVAGYQ, GNFLSLSSLVIAPFVFFSTFL, IMLYGFMMGIVALIVHLVLDA, FVLYSIMQFGFSVGSAPLVSL, VVQVGISIGETVGSICGGAIF, and VGFIAMNLGIALLVFIQLLYL.

The protein localises to the membrane. This is an uncharacterized protein from Schizosaccharomyces pombe (strain 972 / ATCC 24843) (Fission yeast).